Reading from the N-terminus, the 121-residue chain is Small ribosomal subunit protein uS13 (121 aa).

Residues Val-97–Lys-121 form a disordered region. The segment covering Gln-100–Lys-121 has biased composition (basic residues).

It belongs to the universal ribosomal protein uS13 family. In terms of assembly, part of the 30S ribosomal subunit. Forms a loose heterodimer with protein S19. Forms two bridges to the 50S subunit in the 70S ribosome.

Functionally, located at the top of the head of the 30S subunit, it contacts several helices of the 16S rRNA. In the 70S ribosome it contacts the 23S rRNA (bridge B1a) and protein L5 of the 50S subunit (bridge B1b), connecting the 2 subunits; these bridges are implicated in subunit movement. Contacts the tRNAs in the A and P-sites. The protein is Small ribosomal subunit protein uS13 of Prochlorococcus marinus (strain MIT 9303).